We begin with the raw amino-acid sequence, 310 residues long: Serine/threonine-protein phosphatase 4 catalytic subunit (310 aa).

The Mn(2+) site is built by Asp-53, His-55, Asp-81, and Asn-113. Residue His-114 is the Proton donor of the active site. Mn(2+) contacts are provided by His-163 and His-237. At Leu-310 the chain carries Leucine methyl ester.

Belongs to the PPP phosphatase family. PP-4 (PP-X) subfamily. In terms of assembly, catalytic subunit of the histone H2A phosphatase complex (HTP-C) containing PPH3, PSY2 and PSY4. Mn(2+) is required as a cofactor.

The protein localises to the cytoplasm. It is found in the nucleus. The catalysed reaction is O-phospho-L-seryl-[protein] + H2O = L-seryl-[protein] + phosphate. It carries out the reaction O-phospho-L-threonyl-[protein] + H2O = L-threonyl-[protein] + phosphate. Functionally, involved in the dephosphorylation and activation of the transcription factor GLN3 in response to nutrient availability. Forms the histone H2A phosphatase complex in association with the regulatory subunits PSY2 and PSY4, which dephosphorylates H2AS128ph (gamma-H2A) that has been displaced from sites of DNA lesions in the double-stranded DNA break repair process. Dephosphorylation is necessary for efficient recovery from the DNA damage checkpoint. This is Serine/threonine-protein phosphatase 4 catalytic subunit (PPH3) from Eremothecium gossypii (strain ATCC 10895 / CBS 109.51 / FGSC 9923 / NRRL Y-1056) (Yeast).